Here is a 741-residue protein sequence, read N- to C-terminus: Condensin complex subunit 2 (741 aa).

A disordered region spans residues 1–67 (MGPPGPALPA…NDDEKERLQR (67 aa)). A phosphoserine mark is found at serine 15, serine 25, and serine 28. The residue at position 49 (threonine 49) is a Phosphothreonine. 9 positions are modified to phosphoserine: serine 70, serine 78, serine 81, serine 87, serine 89, serine 92, serine 96, serine 201, and serine 233. Acidic residues predominate over residues 361-377 (CGDFPDGSLGDDFDAND). The interval 361–383 (CGDFPDGSLGDDFDANDEPDHTA) is disordered. The residue at position 432 (serine 432) is a Phosphoserine. The segment at 447-467 (FRPRRKQDAPSQSENKKKSTK) is disordered. Lysine 488 is covalently cross-linked (Glycyl lysine isopeptide (Lys-Gly) (interchain with G-Cter in SUMO2)). Serine 496 carries the phosphoserine modification. 2 positions are modified to phosphothreonine: threonine 598 and threonine 605. N6-acetyllysine is present on lysine 637.

This sequence belongs to the CND2 (condensin subunit 2) family. Component of the condensin complex, which contains the SMC2 and SMC4 heterodimer, and three non SMC subunits that probably regulate the complex: NCAPH/BRRN1, NCAPD2/CAPD2 and NCAPG. Phosphorylated by CDK1. Its phosphorylation, as well as that of NCAPD2 and NCAPG subunits, activates the condensin complex and is required for chromosome condensation. Widely expressed at low level. Expressed in proliferating cells.

The protein resides in the nucleus. It localises to the cytoplasm. Its subcellular location is the chromosome. Regulatory subunit of the condensin complex, a complex required for conversion of interphase chromatin into mitotic-like condense chromosomes. The condensin complex probably introduces positive supercoils into relaxed DNA in the presence of type I topoisomerases and converts nicked DNA into positive knotted forms in the presence of type II topoisomerases. Early in neurogenesis, may play an essential role to ensure accurate mitotic chromosome condensation in neuron stem cells, ultimately affecting neuron pool and cortex size. The chain is Condensin complex subunit 2 from Homo sapiens (Human).